A 246-amino-acid polypeptide reads, in one-letter code: Ribonuclease 3 (246 aa).

The RNase III domain occupies 18–147; the sequence is FQELQKKIGI…FIGALYLDQG (130 aa). Glu-60 contacts Mg(2+). The active site involves Asp-64. Mg(2+) is bound by residues Asp-133 and Glu-136. Glu-136 is a catalytic residue. The DRBM domain maps to 173 to 242; sequence DFKSQLQELV…AQMALETLRA (70 aa).

It belongs to the ribonuclease III family. In terms of assembly, homodimer. Requires Mg(2+) as cofactor.

The protein resides in the cytoplasm. The catalysed reaction is Endonucleolytic cleavage to 5'-phosphomonoester.. In terms of biological role, digests double-stranded RNA. Involved in the processing of primary rRNA transcript to yield the immediate precursors to the large and small rRNAs (23S and 16S). Processes some mRNAs, and tRNAs when they are encoded in the rRNA operon. Processes pre-crRNA and tracrRNA of type II CRISPR loci if present in the organism. The protein is Ribonuclease 3 of Geobacillus thermodenitrificans (strain NG80-2).